The sequence spans 1021 residues: Sodium/potassium-transporting ATPase subunit alpha-1 (1021 aa).

Positions 1 to 5 (MGKGV) are excised as a propeptide. The span at 1–11 (MGKGVGRDKYE) shows a compositional bias: basic and acidic residues. The segment at 1 to 37 (MGKGVGRDKYEPAAVSEHGDKKKAKKERDMDELKKEV) is disordered. The Cytoplasmic portion of the chain corresponds to 6–85 (GRDKYEPAAV…NALTPPPTTP (80 aa)). Lys9 is modified (N6-acetyllysine). A Phosphotyrosine modification is found at Tyr10. Residue Ser16 is modified to Phosphoserine; by PKC. Lys21 carries the N6-acetyllysine modification. A compositionally biased stretch (basic and acidic residues) spans 26–37 (KERDMDELKKEV). Phosphoserine occurs at positions 38 and 45. The segment at 80–82 (PPP) is phosphoinositide-3 kinase binding. A helical transmembrane segment spans residues 86 to 106 (EWVKFCRQLFGGFSMLLWIGA). Over 107 to 129 (ILCFLAYGIQAATEEEPQNDNLY) the chain is Extracellular. Residues 130 to 150 (LGVVLSAVVIITGCFSYYQEA) form a helical membrane-spanning segment. The Cytoplasmic segment spans residues 151 to 286 (KSSKIMESFK…GGQTPIAAEI (136 aa)). The tract at residues 214–233 (SSLTGESEPQTRSPDFTNEN) is disordered. A Phosphoserine modification is found at Ser226. Phosphotyrosine is present on Tyr258. A helical membrane pass occupies residues 287–306 (EHFIHIITGVAVFLGVSFFI). The Extracellular segment spans residues 307–318 (LSLILEYTWLEA). Residues 319–336 (VIFLIGIIVANVPEGLLA) traverse the membrane as a helical segment. At 337–770 (TVTVCLTLTA…EEGRLIFDNL (434 aa)) the chain is on the cytoplasmic side. Asp374 serves as the catalytic 4-aspartylphosphate intermediate. Phosphoserine is present on residues Ser450 and Ser482. Residue Lys485 participates in ATP binding. Residue Tyr540 is modified to Phosphotyrosine. The segment at 594–715 (RAAVPDAVGK…QGAIVAVTGD (122 aa)) is mediates interaction with SCN7A. Position 659 is an N6-succinyllysine (Lys659). 2 positions are modified to phosphoserine: Ser666 and Ser673. Asp715 and Asp719 together coordinate Mg(2+). Residues 771 to 790 (KKSIAYTLTSNIPEITPFLI) traverse the membrane as a helical segment. At 791 to 800 (FIIANIPLPL) the chain is on the extracellular side. Residues 801–821 (GTVTILCIDLGTDMVPAISLA) traverse the membrane as a helical segment. Residues 822–841 (YEQAESDIMKRQPRNPKTDK) are Cytoplasmic-facing. A helical transmembrane segment spans residues 842–864 (LVNEQLISMAYGQIGMIQALGGF). The Extracellular segment spans residues 865 to 916 (FTYFVILAENGFLPIHLLGLRVNWDDRWINDVEDSYGQQWTYEQRKIVEFTC). The chain crosses the membrane as a helical span at residues 917 to 936 (HTPFFVTIVVVQWADLVICK). Residues 937–949 (TRRNSVFQQGMKN) are Cytoplasmic-facing. Ser941 carries the post-translational modification Phosphoserine; by PKA. A helical transmembrane segment spans residues 950–968 (KILIFGLFEETALAAFLSY). Residues 969 to 983 (CPGMGVALRMYPLKP) are Extracellular-facing. Residues 984-1004 (TWWFCAFPYSLLIFVYDEVRK) traverse the membrane as a helical segment. The Cytoplasmic portion of the chain corresponds to 1005–1021 (LIIRRRPGGWVEKETYY).

It belongs to the cation transport ATPase (P-type) (TC 3.A.3) family. Type IIC subfamily. The sodium/potassium-transporting ATPase is composed of a catalytic alpha subunit, an auxiliary non-catalytic beta subunit and an additional regulatory subunit. Interacts with regulatory subunit FXYD1. Interacts with regulatory subunit FXYD3. Interacts with SIK1. Interacts with SLC35G1 and STIM1. Interacts with CLN3; this interaction regulates the sodium/potassium-transporting ATPase complex localization at the plasma membrane. Interacts with SCN7A; activates ATP1A1 P-type sodium:potassium-exchanging transporter activity which indirectly signals to nearby neurons to regulate sodium homeostasis. Phosphorylation on Tyr-10 modulates pumping activity. Phosphorylation of Ser-941 by PKA modulates the response of ATP1A1 to PKC. Dephosphorylation by protein phosphatase 2A (PP2A) following increases in intracellular sodium, leading to increase catalytic activity.

It localises to the cell membrane. It is found in the basolateral cell membrane. Its subcellular location is the sarcolemma. The protein localises to the cell projection. The protein resides in the axon. It localises to the melanosome. The catalysed reaction is K(+)(out) + Na(+)(in) + ATP + H2O = K(+)(in) + Na(+)(out) + ADP + phosphate + H(+). In terms of biological role, this is the catalytic component of the active enzyme, which catalyzes the hydrolysis of ATP coupled with the exchange of sodium and potassium ions across the plasma membrane. This action creates the electrochemical gradient of sodium and potassium ions, providing the energy for active transport of various nutrients. Could also be part of an osmosensory signaling pathway that senses body-fluid sodium levels and controls salt intake behavior as well as voluntary water intake to regulate sodium homeostasis. The chain is Sodium/potassium-transporting ATPase subunit alpha-1 (ATP1A1) from Sus scrofa (Pig).